We begin with the raw amino-acid sequence, 193 residues long: Xanthine phosphoribosyltransferase (193 aa).

Residues Leu-20 and Thr-27 each coordinate xanthine. 128 to 132 serves as a coordination point for 5-phospho-alpha-D-ribose 1-diphosphate; the sequence is ANGQA. Residue Lys-156 participates in xanthine binding.

Belongs to the purine/pyrimidine phosphoribosyltransferase family. Xpt subfamily. In terms of assembly, homodimer.

The protein localises to the cytoplasm. It carries out the reaction XMP + diphosphate = xanthine + 5-phospho-alpha-D-ribose 1-diphosphate. It functions in the pathway purine metabolism; XMP biosynthesis via salvage pathway; XMP from xanthine: step 1/1. In terms of biological role, converts the preformed base xanthine, a product of nucleic acid breakdown, to xanthosine 5'-monophosphate (XMP), so it can be reused for RNA or DNA synthesis. The sequence is that of Xanthine phosphoribosyltransferase from Streptococcus agalactiae serotype Ia (strain ATCC 27591 / A909 / CDC SS700).